A 181-amino-acid polypeptide reads, in one-letter code: MLKRKELARKAVRLIVKKVPKEKESILKVDEFLGTLSTAYRKDKLLRNFFLSPQIDRNAKVKALESLAKKYDVPKEVLEVLEYLIDINAMALIPEIKRLYELELEKLMGMLKGELILAKKPSKKLLEKITKTINDILNRQIEIEVKEDPSLIGGFVFKTQAFVLDTSVKTQLEKLARVGGV.

This sequence belongs to the ATPase delta chain family. As to quaternary structure, F-type ATPases have 2 components, F(1) - the catalytic core - and F(0) - the membrane proton channel. F(1) has five subunits: alpha(3), beta(3), gamma(1), delta(1), epsilon(1). F(0) has three main subunits: a(1), b(2) and c(10-14). The alpha and beta chains form an alternating ring which encloses part of the gamma chain. F(1) is attached to F(0) by a central stalk formed by the gamma and epsilon chains, while a peripheral stalk is formed by the delta and b chains.

It is found in the cell inner membrane. Functionally, f(1)F(0) ATP synthase produces ATP from ADP in the presence of a proton or sodium gradient. F-type ATPases consist of two structural domains, F(1) containing the extramembraneous catalytic core and F(0) containing the membrane proton channel, linked together by a central stalk and a peripheral stalk. During catalysis, ATP synthesis in the catalytic domain of F(1) is coupled via a rotary mechanism of the central stalk subunits to proton translocation. Its function is as follows. This protein is part of the stalk that links CF(0) to CF(1). It either transmits conformational changes from CF(0) to CF(1) or is implicated in proton conduction. This Aquifex aeolicus (strain VF5) protein is ATP synthase subunit delta.